Consider the following 500-residue polypeptide: Probable cation transporter HKT1;4 (500 aa).

The Cytoplasmic portion of the chain corresponds to 1–12 (MPTSRRALAGGA). A run of 2 helical transmembrane segments spans residues 13–33 (LSMHVAYFLAISCLGYGLLGV) and 74–94 (LVVLTVLMLLGGEVFVSLVGL). Residues 95–156 (ASKWSKLRSD…ADTLRHNAVR (62 aa)) are Cytoplasmic-facing. Residues 121–145 (ADIDGGDVENPTSSGEEAASRRRPM) are disordered. 2 helical membrane passes run 157 to 177 (ALFYIVLAIFAVVHVVGAVAV) and 239 to 259 (VLAGNTLFAPLLAACVWAAAA). Residues 260-290 (ATRREELVEMAREGGRAAAAGYAHLMPARRC) lie on the Cytoplasmic side of the membrane. Transmembrane regions (helical) follow at residues 291 to 311 (WMLAATVAAFVAVLMALVCGM) and 346 to 366 (LSILAPAILVLFVLMMYLPPY). The Cytoplasmic portion of the chain corresponds to 367-390 (TTWFPFEENSTTKDSNAENQGIRL). 2 consecutive transmembrane segments (helical) span residues 391–411 (LESTLLSQLSYLTIFVIAICI) and 464–484 (GFVGRWSDSGKLILIFVMFFG). The Cytoplasmic segment spans residues 485–500 (RLKKFSMKGGKAWKLS).

Belongs to the TrkH potassium transport family. HKT (TC 2.A.38.3) subfamily.

The protein resides in the membrane. Probable cation transporter. May be involved in regulation of potassium-sodium homeostasis. This chain is Probable cation transporter HKT1;4, found in Oryza sativa subsp. japonica (Rice).